Reading from the N-terminus, the 199-residue chain is Molybdenum cofactor guanylyltransferase (199 aa).

Residues 12 to 14, lysine 25, asparagine 53, aspartate 71, and aspartate 101 contribute to the GTP site; that span reads LAG. Residue aspartate 101 participates in Mg(2+) binding.

This sequence belongs to the MobA family. Monomer. The cofactor is Mg(2+).

Its subcellular location is the cytoplasm. It carries out the reaction Mo-molybdopterin + GTP + H(+) = Mo-molybdopterin guanine dinucleotide + diphosphate. Functionally, transfers a GMP moiety from GTP to Mo-molybdopterin (Mo-MPT) cofactor (Moco or molybdenum cofactor) to form Mo-molybdopterin guanine dinucleotide (Mo-MGD) cofactor. The chain is Molybdenum cofactor guanylyltransferase from Polynucleobacter asymbioticus (strain DSM 18221 / CIP 109841 / QLW-P1DMWA-1) (Polynucleobacter necessarius subsp. asymbioticus).